The following is a 106-amino-acid chain: NADH-quinone oxidoreductase subunit K (106 aa).

3 consecutive transmembrane segments (helical) span residues leucine 9–leucine 29, isoleucine 35–phenylalanine 55, and phenylalanine 70–phenylalanine 90.

This sequence belongs to the complex I subunit 4L family. In terms of assembly, NDH-1 is composed of 14 different subunits. Subunits NuoA, H, J, K, L, M, N constitute the membrane sector of the complex.

The protein resides in the cell inner membrane. It catalyses the reaction a quinone + NADH + 5 H(+)(in) = a quinol + NAD(+) + 4 H(+)(out). In terms of biological role, NDH-1 shuttles electrons from NADH, via FMN and iron-sulfur (Fe-S) centers, to quinones in the respiratory chain. The immediate electron acceptor for the enzyme in this species is believed to be ubiquinone. Couples the redox reaction to proton translocation (for every two electrons transferred, four hydrogen ions are translocated across the cytoplasmic membrane), and thus conserves the redox energy in a proton gradient. This is NADH-quinone oxidoreductase subunit K from Granulibacter bethesdensis (strain ATCC BAA-1260 / CGDNIH1).